The following is a 299-amino-acid chain: Anti-sigma-D factor RsdA (299 aa).

The helical transmembrane segment at 86-106 (LAAVGSVAAALLVLSGFGAVV) threads the bilayer. The interval 187–299 (NTKVETRDPN…APETPVSPTH (113 aa)) is disordered. Low complexity-rich tracts occupy residues 201–212 (PGSPSNPAAPGS) and 250–271 (PNSTSTVAASPSTPSSKPEPGS).

As to quaternary structure, interacts with ECF RNA polymerase sigma factor SigD; this should inhibit the interaction of SigD with the RNA polymerase catalytic core. In terms of processing, the cytosolic fragment is degraded by a ClpP1-ClpP2-ClpX complex, as would be expected after S1P and S2P intramembrane proteolysis. This releases SigD so that it may bind to the RNA polymerase catalytic core.

It is found in the cell membrane. In terms of biological role, an anti-sigma factor for extracytoplasmic function (ECF) sigma factor SigD. ECF sigma factors are held in an inactive form by an anti-sigma factor until released by regulated intramembrane proteolysis (RIP). RIP occurs when an extracytoplasmic signal triggers a concerted proteolytic cascade to transmit information and elicit cellular responses. The membrane-spanning regulatory substrate protein is first cut extracytoplasmically (site-1 protease, S1P), then within the membrane itself (site-2 protease, S2P), while cytoplasmic proteases finish degrading the regulatory protein, liberating the sigma factor. Neither S1P nor S2P proteases have been so far identified for this anti-sigma factor. The sequence is that of Anti-sigma-D factor RsdA (rsda) from Mycobacterium bovis (strain ATCC BAA-935 / AF2122/97).